The following is a 1890-amino-acid chain: DNA polymerase zeta catalytic subunit (1890 aa).

Composition is skewed to polar residues over residues 508–533 (QENLPDFGSSTKRALPSNPDSQNLRT) and 549–560 (PDSSTSNGASEN). 2 disordered regions span residues 508-565 (QENL…FRRY) and 922-942 (GDSNIDSEKQPLRDNHNDRGA). Basic and acidic residues predominate over residues 922–940 (GDSNIDSEKQPLRDNHNDR). Positions 1789, 1792, 1803, and 1806 each coordinate Zn(2+). Residues 1789 to 1806 (CILCGEVVQESAQLCNRC) form a CysA-type zinc finger. Residues C1835, C1838, C1851, and C1856 each coordinate [4Fe-4S] cluster. The CysB motif motif lies at 1835–1856 (CRHCGGGDWVVQSGVKCNSLAC).

Belongs to the DNA polymerase type-B family. As to quaternary structure, forms DNA polymerase zeta with REV7. [4Fe-4S] cluster serves as cofactor. Expressed in roots, leaves and flowers.

It localises to the nucleus. The enzyme catalyses DNA(n) + a 2'-deoxyribonucleoside 5'-triphosphate = DNA(n+1) + diphosphate. Catalytic subunit of the error prone DNA polymerase zeta. Involved in damage-tolerance mechanisms through translesion DNA synthesis. This chain is DNA polymerase zeta catalytic subunit (REV3), found in Arabidopsis thaliana (Mouse-ear cress).